Here is a 283-residue protein sequence, read N- to C-terminus: Thymidylate synthase (283 aa).

DUMP is bound at residue Arg-22. Residue Cys-160 is the Nucleophile of the active site. Residues 180–183 (RSCD), Asn-191, and 221–223 (HIY) each bind dUMP. (6R)-5,10-methylene-5,6,7,8-tetrahydrofolate is bound at residue Asp-183. Residue Ser-282 coordinates (6R)-5,10-methylene-5,6,7,8-tetrahydrofolate.

This sequence belongs to the thymidylate synthase family. Bacterial-type ThyA subfamily. In terms of assembly, homodimer.

Its subcellular location is the cytoplasm. It carries out the reaction dUMP + (6R)-5,10-methylene-5,6,7,8-tetrahydrofolate = 7,8-dihydrofolate + dTMP. It participates in pyrimidine metabolism; dTTP biosynthesis. In terms of biological role, catalyzes the reductive methylation of 2'-deoxyuridine-5'-monophosphate (dUMP) to 2'-deoxythymidine-5'-monophosphate (dTMP) while utilizing 5,10-methylenetetrahydrofolate (mTHF) as the methyl donor and reductant in the reaction, yielding dihydrofolate (DHF) as a by-product. This enzymatic reaction provides an intracellular de novo source of dTMP, an essential precursor for DNA biosynthesis. This chain is Thymidylate synthase, found in Aliivibrio fischeri (strain ATCC 700601 / ES114) (Vibrio fischeri).